Here is a 224-residue protein sequence, read N- to C-terminus: tRNA (guanine-N(7)-)-methyltransferase (224 aa).

Residues Glu54, Glu79, Glu106, and Asp129 each contribute to the S-adenosyl-L-methionine site. Residue Asp129 is part of the active site. Residues Lys133 and Asp165 each contribute to the substrate site.

It belongs to the class I-like SAM-binding methyltransferase superfamily. TrmB family.

It catalyses the reaction guanosine(46) in tRNA + S-adenosyl-L-methionine = N(7)-methylguanosine(46) in tRNA + S-adenosyl-L-homocysteine. It participates in tRNA modification; N(7)-methylguanine-tRNA biosynthesis. In terms of biological role, catalyzes the formation of N(7)-methylguanine at position 46 (m7G46) in tRNA. The protein is tRNA (guanine-N(7)-)-methyltransferase of Chlamydia caviae (strain ATCC VR-813 / DSM 19441 / 03DC25 / GPIC) (Chlamydophila caviae).